The chain runs to 338 residues: MLTERQLLILQTIIDDFIGSAQPVGSRTLAKKDEITFSSATIRNEMADLEELGFIEKTHSSSGRVPSEKGYRFYVDHLLAPQNLPNDEIVQIKDLFAERIFEAEKIAQQSAQILSELTNYTAIVLGPKLSTNKLKNVQIVPLDRQTAVAIIVTDTGHVQSKTITVPESVDLSDLEKMVNILNEKLSGVPMSELHNKIFKEIVTVLRGYVHNYDSAIKILDGTFQVPLSEKIYFGGKANMLSQPEFHDIQKVRSLLTMIDNEAEFYDILRHKQVGIQVKIGRENSSTAMEDCSLISATYSIGEEQVGTIAILGPTRMQYSRVISLLQLFTRQITDGLKK.

This sequence belongs to the HrcA family.

In terms of biological role, negative regulator of class I heat shock genes (grpE-dnaK-dnaJ and groELS operons). Prevents heat-shock induction of these operons. In Bacillus cereus (strain ATCC 10987 / NRS 248), this protein is Heat-inducible transcription repressor HrcA.